We begin with the raw amino-acid sequence, 373 residues long: 2-phosphonomethylmalate synthase (373 aa).

In terms of domain architecture, Pyruvate carboxyltransferase spans 5–256 (LVLEDTTLRD…DLGIDLTKLK (252 aa)).

It belongs to the alpha-IPM synthase/homocitrate synthase family.

The enzyme catalyses 3-phosphonopyruvate + acetyl-CoA + H2O = (R)-2-(phosphonomethyl)malate + CoA + H(+). Its pathway is antibiotic biosynthesis. Its function is as follows. Acyltransferase involved in the biosynthesis of the phosphonate antibiotic FR-900098, a potent antimalarial agent that acts as an inhibitor of 1-deoxy-D-xylulose 5-phosphate reductoisomerase (DXR), the first enzyme in the nonmevalonate pathway for isoprenoid biosynthesis. Catalyzes the condensation between acetyl-CoA and phosphonopyruvate to yield (R)-2-(phosphonomethyl)malate. The polypeptide is 2-phosphonomethylmalate synthase (Streptomyces rubellomurinus (strain ATCC 31215)).